We begin with the raw amino-acid sequence, 491 residues long: Stage IV sporulation protein A (491 aa).

The Walker A motif; involved in ATP-binding motif lies at 23–30 (GPVRTGKS). 23–30 (GPVRTGKS) contacts ATP. Positions 334-362 (QLLSLITRLSKVKNEYDKIESALIDAKIK) form a coiled coil.

As to quaternary structure, interacts (via Walker A motif) with SipL (via C-terminus LysM domain).

The protein resides in the cytoplasm. It carries out the reaction ATP + H2O = ADP + phosphate + H(+). In terms of biological role, ATPase. Has a role at an early stage in the morphogenesis of the spore coat and is required for proper coat localization to the forespore. The protein is Stage IV sporulation protein A of Clostridioides difficile (strain 630) (Peptoclostridium difficile).